The following is a 75-amino-acid chain: M-myrmeciitoxin-Mp2a (75 aa).

An N-terminal signal peptide occupies residues 1–26 (MKLSCLLLTLAIIFVLTIVHAPNVEA). Residues 27 to 48 (KALADPESDAVGFADAVGEADP) constitute a propeptide that is removed on maturation. Leucine 74 carries the leucine amide modification.

It belongs to the formicidae venom precursor-01 superfamily. Ant pilosulin family. Heterodimer with M-MIITX-Mp2b (pilosin-3b) (AC P0C023); disulfide-linked. Only heterodimers (and not monomers) have been identified in the venom. As to expression, expressed by the venom gland.

It is found in the secreted. Functionally, heterodimer protein that may serve both defensive (pain-inducing) and predatory (insecticidal) roles. Has membrane-disrupting activity and shows induction of non-specific calcium influx into cells,. Shows broad-spectrum activity against a diverse range of bacteria, and cell lines, as well as hemolytic activity (EC(50)=2.18 uM). In vivo, shows moderate insecticidal activity against D.melanogaster and potent anthelmintic activity against the veterinary nematode H.contortus. In addition, intraplantar injection into mice induces nocifensive behavior and mechanical allodynia. The polypeptide is M-myrmeciitoxin-Mp2a (Myrmecia pilosula (Jack jumper ant)).